Consider the following 153-residue polypeptide: 3-hydroxyacyl-[acyl-carrier-protein] dehydratase FabZ (153 aa).

The active site involves H54.

Belongs to the thioester dehydratase family. FabZ subfamily.

It is found in the cytoplasm. It catalyses the reaction a (3R)-hydroxyacyl-[ACP] = a (2E)-enoyl-[ACP] + H2O. Its function is as follows. Involved in unsaturated fatty acids biosynthesis. Catalyzes the dehydration of short chain beta-hydroxyacyl-ACPs and long chain saturated and unsaturated beta-hydroxyacyl-ACPs. In Shewanella frigidimarina (strain NCIMB 400), this protein is 3-hydroxyacyl-[acyl-carrier-protein] dehydratase FabZ.